The sequence spans 95 residues: UPF0473 protein PEPE_1260 (95 aa).

The protein belongs to the UPF0473 family.

The protein is UPF0473 protein PEPE_1260 of Pediococcus pentosaceus (strain ATCC 25745 / CCUG 21536 / LMG 10740 / 183-1w).